Reading from the N-terminus, the 425-residue chain is MKPQQPQPPLLLLLLLPLLLTTVSSYPLNPKQLKALQSLNISTPTNDPCNNNNNQSSSSSITCDDASPYRHITSISFTNCSSTLSLPSKTLKPLSKSLISLSFTNCPSLSPPYHLPISLHSFSAVSSFLQNNRTKLSGLFLARLKNLKTLYISSTPIQTSRRLYVILGNMHKLTSLTISNSNLTGLIPKSFHSNLRYIDLSNNSLKGSIRISITRLKNLKSLNLSHNSLSGQIPNKIKSLTFLKNLSLASNKLSGTIPNSLSSISELTHLDLSMNQLNGTVPSFFSEMKNLKHLNLADNSFHGVLPFNESFIKNLNFFEIGRNSELCYNKTVLSSNLKLEGLAPCDKYGFPLWSPSQKEESLSGENDYDVEGGNEEKTENLKTKEEEEEEHKGSNKTLFGLGIGLFSLVFLILFLFYLAKRCRLI.

The first 25 residues, 1-25 (MKPQQPQPPLLLLLLLPLLLTTVSS), serve as a signal peptide directing secretion. The Extracellular portion of the chain corresponds to 26 to 397 (YPLNPKQLKA…EEEHKGSNKT (372 aa)). N-linked (GlcNAc...) asparagine glycans are attached at residues asparagine 40, asparagine 54, asparagine 79, and asparagine 132. 7 LRR repeats span residues 144-169 (LKNL…ILGN), 170-193 (MHKL…SFHS), 195-216 (LRYI…ITRL), 217-240 (KNLK…IKSL), 242-264 (FLKN…LSSI), 265-287 (SELT…FFSE), and 288-313 (MKNL…SFIK). Asparagine 182, asparagine 202, asparagine 223, asparagine 245, asparagine 278, asparagine 308, and asparagine 329 each carry an N-linked (GlcNAc...) asparagine glycan. Residues 355 to 389 (PSQKEESLSGENDYDVEGGNEEKTENLKTKEEEEE) form a disordered region. Basic and acidic residues predominate over residues 374–389 (NEEKTENLKTKEEEEE). A glycan (N-linked (GlcNAc...) asparagine) is linked at asparagine 395. The helical transmembrane segment at 398–418 (LFGLGIGLFSLVFLILFLFYL) threads the bilayer. Topologically, residues 419–425 (AKRCRLI) are cytoplasmic.

It belongs to the RLP family.

The protein resides in the cell membrane. Involved in plant defense. The sequence is that of Receptor-like protein 55 from Arabidopsis thaliana (Mouse-ear cress).